We begin with the raw amino-acid sequence, 120 residues long: NAD(P)H-quinone oxidoreductase subunit 3, chloroplastic (120 aa).

3 helical membrane-spanning segments follow: residues 9-29, 64-84, and 88-108; these read IFWA…LISG, MFAL…PWAM, and VLGV…IVGL.

The protein belongs to the complex I subunit 3 family. In terms of assembly, NDH is composed of at least 16 different subunits, 5 of which are encoded in the nucleus.

It is found in the plastid. The protein localises to the chloroplast thylakoid membrane. The catalysed reaction is a plastoquinone + NADH + (n+1) H(+)(in) = a plastoquinol + NAD(+) + n H(+)(out). It carries out the reaction a plastoquinone + NADPH + (n+1) H(+)(in) = a plastoquinol + NADP(+) + n H(+)(out). In terms of biological role, NDH shuttles electrons from NAD(P)H:plastoquinone, via FMN and iron-sulfur (Fe-S) centers, to quinones in the photosynthetic chain and possibly in a chloroplast respiratory chain. The immediate electron acceptor for the enzyme in this species is believed to be plastoquinone. Couples the redox reaction to proton translocation, and thus conserves the redox energy in a proton gradient. This is NAD(P)H-quinone oxidoreductase subunit 3, chloroplastic from Ceratophyllum demersum (Rigid hornwort).